The chain runs to 484 residues: Malonate-semialdehyde dehydrogenase 1 (484 aa).

NAD(+)-binding residues include F154, K178, E181, R182, and S231. C286 (nucleophile) is an active-site residue. E384 contributes to the NAD(+) binding site.

The protein belongs to the aldehyde dehydrogenase family. IolA subfamily. Homotetramer.

The enzyme catalyses 3-oxopropanoate + NAD(+) + CoA + H2O = hydrogencarbonate + acetyl-CoA + NADH + H(+). It catalyses the reaction 2-methyl-3-oxopropanoate + NAD(+) + CoA + H2O = propanoyl-CoA + hydrogencarbonate + NADH + H(+). It functions in the pathway polyol metabolism; myo-inositol degradation into acetyl-CoA; acetyl-CoA from myo-inositol: step 7/7. Its function is as follows. Catalyzes the oxidation of malonate semialdehyde (MSA) and methylmalonate semialdehyde (MMSA) into acetyl-CoA and propanoyl-CoA, respectively. Is involved in a myo-inositol catabolic pathway. Bicarbonate, and not CO2, is the end-product of the enzymatic reaction. In Bacillus licheniformis (strain ATCC 14580 / DSM 13 / JCM 2505 / CCUG 7422 / NBRC 12200 / NCIMB 9375 / NCTC 10341 / NRRL NRS-1264 / Gibson 46), this protein is Malonate-semialdehyde dehydrogenase 1.